The primary structure comprises 154 residues: Putative pre-16S rRNA nuclease (154 aa).

The protein belongs to the YqgF nuclease family.

Its subcellular location is the cytoplasm. Functionally, could be a nuclease involved in processing of the 5'-end of pre-16S rRNA. The sequence is that of Putative pre-16S rRNA nuclease from Rickettsia akari (strain Hartford).